We begin with the raw amino-acid sequence, 228 residues long: Ribulose-phosphate 3-epimerase (228 aa).

Residue Ser9 coordinates substrate. 3 residues coordinate a divalent metal cation: His34, Asp36, and His70. The active-site Proton acceptor is Asp36. Substrate-binding positions include His70, 146–149 (GFPG), 179–181 (DGG), and 201–202 (GS). An a divalent metal cation-binding site is contributed by Asp179. Asp179 serves as the catalytic Proton donor.

The protein belongs to the ribulose-phosphate 3-epimerase family. A divalent metal cation serves as cofactor.

It carries out the reaction D-ribulose 5-phosphate = D-xylulose 5-phosphate. It functions in the pathway carbohydrate degradation. Its function is as follows. Catalyzes the reversible epimerization of D-ribulose 5-phosphate to D-xylulose 5-phosphate. This Buchnera aphidicola subsp. Baizongia pistaciae (strain Bp) protein is Ribulose-phosphate 3-epimerase.